The primary structure comprises 263 residues: Endonuclease 8 (263 aa).

Catalysis depends on Pro-2, which acts as the Schiff-base intermediate with DNA. The active-site Proton donor is Glu-3. Lys-53 (proton donor; for beta-elimination activity) is an active-site residue. DNA is bound by residues Gln-70, Arg-125, and Asn-169. The segment at 229–263 (KVFHRDGEACERCGGIIEKTTLSSRPFYWCAHCQK) adopts an FPG-type zinc-finger fold. The active-site Proton donor; for delta-elimination activity is Arg-253.

It belongs to the FPG family. It depends on Zn(2+) as a cofactor.

The enzyme catalyses 2'-deoxyribonucleotide-(2'-deoxyribose 5'-phosphate)-2'-deoxyribonucleotide-DNA = a 3'-end 2'-deoxyribonucleotide-(2,3-dehydro-2,3-deoxyribose 5'-phosphate)-DNA + a 5'-end 5'-phospho-2'-deoxyribonucleoside-DNA + H(+). In terms of biological role, involved in base excision repair of DNA damaged by oxidation or by mutagenic agents. Acts as a DNA glycosylase that recognizes and removes damaged bases. Has a preference for oxidized pyrimidines, such as thymine glycol, 5,6-dihydrouracil and 5,6-dihydrothymine. Has AP (apurinic/apyrimidinic) lyase activity and introduces nicks in the DNA strand. Cleaves the DNA backbone by beta-delta elimination to generate a single-strand break at the site of the removed base with both 3'- and 5'-phosphates. This Salmonella typhi protein is Endonuclease 8.